The following is a 328-amino-acid chain: L-lactate dehydrogenase (328 aa).

NAD(+) is bound by residues V18, E39, K46, Y71, and 85 to 86 (GA). 2 residues coordinate substrate: Q88 and R94. Residues S107, 124–126 (AAN), and S149 contribute to the NAD(+) site. 126–129 (NPVD) is a binding site for substrate. 154 to 157 (DSAR) contributes to the substrate binding site. R159 and H174 together coordinate beta-D-fructose 1,6-bisphosphate. Residue H181 is the Proton acceptor of the active site. Y226 is modified (phosphotyrosine). Residue T235 coordinates substrate.

It belongs to the LDH/MDH superfamily. LDH family. As to quaternary structure, homotetramer.

The protein localises to the cytoplasm. The catalysed reaction is (S)-lactate + NAD(+) = pyruvate + NADH + H(+). Its pathway is fermentation; pyruvate fermentation to lactate; (S)-lactate from pyruvate: step 1/1. With respect to regulation, allosterically activated by fructose 1,6-bisphosphate (FBP). In terms of biological role, catalyzes the conversion of lactate to pyruvate. The polypeptide is L-lactate dehydrogenase (Streptococcus gordonii (strain Challis / ATCC 35105 / BCRC 15272 / CH1 / DL1 / V288)).